A 109-amino-acid chain; its full sequence is RNA-binding protein Hfq (109 aa).

The region spanning 9 to 68 (DPFLNALRKEKVNVSVYLVNGIKLQGQVEAFDQFCIVLRNTVNQMVYKHAISTIVPAKSV) is the Sm domain. The segment at 77-109 (PYHQNSNDEQDENVDDIHSDDLEIQENEGNIHE) is disordered.

Belongs to the Hfq family. As to quaternary structure, homohexamer.

RNA chaperone that binds small regulatory RNA (sRNAs) and mRNAs to facilitate mRNA translational regulation in response to envelope stress, environmental stress and changes in metabolite concentrations. Also binds with high specificity to tRNAs. In Francisella tularensis subsp. mediasiatica (strain FSC147), this protein is RNA-binding protein Hfq.